Consider the following 296-residue polypeptide: Lipoyl synthase (296 aa).

Residues cysteine 37, cysteine 42, cysteine 48, cysteine 63, cysteine 67, cysteine 70, and serine 276 each coordinate [4Fe-4S] cluster. The 217-residue stretch at 49–265 (WSKKHTTVMI…ERLAKTKGFL (217 aa)) folds into the Radical SAM core domain.

This sequence belongs to the radical SAM superfamily. Lipoyl synthase family. Requires [4Fe-4S] cluster as cofactor.

The protein resides in the cytoplasm. The enzyme catalyses [[Fe-S] cluster scaffold protein carrying a second [4Fe-4S](2+) cluster] + N(6)-octanoyl-L-lysyl-[protein] + 2 oxidized [2Fe-2S]-[ferredoxin] + 2 S-adenosyl-L-methionine + 4 H(+) = [[Fe-S] cluster scaffold protein] + N(6)-[(R)-dihydrolipoyl]-L-lysyl-[protein] + 4 Fe(3+) + 2 hydrogen sulfide + 2 5'-deoxyadenosine + 2 L-methionine + 2 reduced [2Fe-2S]-[ferredoxin]. It functions in the pathway protein modification; protein lipoylation via endogenous pathway; protein N(6)-(lipoyl)lysine from octanoyl-[acyl-carrier-protein]: step 2/2. Functionally, catalyzes the radical-mediated insertion of two sulfur atoms into the C-6 and C-8 positions of the octanoyl moiety bound to the lipoyl domains of lipoate-dependent enzymes, thereby converting the octanoylated domains into lipoylated derivatives. The chain is Lipoyl synthase from Rickettsia rickettsii (strain Iowa).